The primary structure comprises 133 residues: MEYSTFGRHVAVDTWGVQFDLLNDAEFLKKEMIEAAEACGATVLSVQAKQFSPQGATVLVLLSESHLSIHTYPERGFAALDCYTCGETVDPQIAIDYLVSVLKPEKTYAKKLVRGLGELQVVEPEMKLVEAAK.

Catalysis depends on S65, which acts as the Schiff-base intermediate with substrate; via pyruvic acid. S65 carries the pyruvic acid (Ser); by autocatalysis modification. Catalysis depends on H70, which acts as the Proton acceptor; for processing activity. Residue C85 is the Proton donor; for catalytic activity of the active site.

This sequence belongs to the prokaryotic AdoMetDC family. Type 1 subfamily. As to quaternary structure, heterotetramer of two alpha and two beta chains arranged as a dimer of alpha/beta heterodimers. Pyruvate is required as a cofactor. Is synthesized initially as an inactive proenzyme. Formation of the active enzyme involves a self-maturation process in which the active site pyruvoyl group is generated from an internal serine residue via an autocatalytic post-translational modification. Two non-identical subunits are generated from the proenzyme in this reaction, and the pyruvate is formed at the N-terminus of the alpha chain, which is derived from the carboxyl end of the proenzyme. The post-translation cleavage follows an unusual pathway, termed non-hydrolytic serinolysis, in which the side chain hydroxyl group of the serine supplies its oxygen atom to form the C-terminus of the beta chain, while the remainder of the serine residue undergoes an oxidative deamination to produce ammonia and the pyruvoyl group blocking the N-terminus of the alpha chain.

The enzyme catalyses S-adenosyl-L-methionine + H(+) = S-adenosyl 3-(methylsulfanyl)propylamine + CO2. It participates in amine and polyamine biosynthesis; S-adenosylmethioninamine biosynthesis; S-adenosylmethioninamine from S-adenosyl-L-methionine: step 1/1. Its function is as follows. Catalyzes the decarboxylation of S-adenosylmethionine to S-adenosylmethioninamine (dcAdoMet), the propylamine donor required for the synthesis of the polyamines spermine and spermidine from the diamine putrescine. This Brevibacillus brevis (strain 47 / JCM 6285 / NBRC 100599) protein is S-adenosylmethionine decarboxylase proenzyme.